Here is a 612-residue protein sequence, read N- to C-terminus: Glutamine--fructose-6-phosphate aminotransferase [isomerizing] (612 aa).

The Nucleophile; for GATase activity role is filled by cysteine 2. The 219-residue stretch at cysteine 2–aspartate 220 folds into the Glutamine amidotransferase type-2 domain. 2 consecutive SIS domains span residues alanine 288–leucine 428 and tryptophan 461–proline 602. Lysine 607 acts as the For Fru-6P isomerization activity in catalysis.

In terms of assembly, homodimer.

The protein localises to the cytoplasm. The catalysed reaction is D-fructose 6-phosphate + L-glutamine = D-glucosamine 6-phosphate + L-glutamate. Catalyzes the first step in hexosamine metabolism, converting fructose-6P into glucosamine-6P using glutamine as a nitrogen source. This chain is Glutamine--fructose-6-phosphate aminotransferase [isomerizing], found in Neisseria meningitidis serogroup B (strain ATCC BAA-335 / MC58).